The sequence spans 341 residues: Ketol-acid reductoisomerase (NADP(+)) (341 aa).

One can recognise a KARI N-terminal Rossmann domain in the interval 1 to 182 (MTELFYDDDA…GGTRAGVIKT (182 aa)). NADP(+) contacts are provided by residues 25–28 (YGSQ), serine 51, serine 53, and 83–86 (DQVQ). Histidine 108 is an active-site residue. Glycine 134 contributes to the NADP(+) binding site. The region spanning 183 to 328 (TFTEETETDL…RELRKLFSWI (146 aa)) is the KARI C-terminal knotted domain. Residues aspartate 191, glutamate 195, glutamate 227, and glutamate 231 each coordinate Mg(2+). A substrate-binding site is contributed by serine 252.

Belongs to the ketol-acid reductoisomerase family. Mg(2+) serves as cofactor.

It catalyses the reaction (2R)-2,3-dihydroxy-3-methylbutanoate + NADP(+) = (2S)-2-acetolactate + NADPH + H(+). The enzyme catalyses (2R,3R)-2,3-dihydroxy-3-methylpentanoate + NADP(+) = (S)-2-ethyl-2-hydroxy-3-oxobutanoate + NADPH + H(+). It functions in the pathway amino-acid biosynthesis; L-isoleucine biosynthesis; L-isoleucine from 2-oxobutanoate: step 2/4. The protein operates within amino-acid biosynthesis; L-valine biosynthesis; L-valine from pyruvate: step 2/4. Involved in the biosynthesis of branched-chain amino acids (BCAA). Catalyzes an alkyl-migration followed by a ketol-acid reduction of (S)-2-acetolactate (S2AL) to yield (R)-2,3-dihydroxy-isovalerate. In the isomerase reaction, S2AL is rearranged via a Mg-dependent methyl migration to produce 3-hydroxy-3-methyl-2-ketobutyrate (HMKB). In the reductase reaction, this 2-ketoacid undergoes a metal-dependent reduction by NADPH to yield (R)-2,3-dihydroxy-isovalerate. In Renibacterium salmoninarum (strain ATCC 33209 / DSM 20767 / JCM 11484 / NBRC 15589 / NCIMB 2235), this protein is Ketol-acid reductoisomerase (NADP(+)).